Consider the following 573-residue polypeptide: Cytochrome P450 monooxygenase GME11363 (573 aa).

Residues 10-30 form a helical membrane-spanning segment; the sequence is IGVVAAVLLAALILLYRAALP. Cysteine 519 is a binding site for heme.

The protein belongs to the cytochrome P450 family. Heme serves as cofactor.

The protein resides in the membrane. It participates in secondary metabolite biosynthesis. Its function is as follows. Cytochrome P450 monooxygenase; part of the gene cluster that mediates the biosynthesis of dibenzodioxocinones such as pestalotiollide B, a novel class of inhibitors against cholesterol ester transfer protein (CEPT). The biosynthesis initiates from condensation of acetate and malonate units catalyzed by the non-reducing PKS pks8/GME11356. Pks8/GME11356 lacks a thioesterase (TE) domain, which is important to the cyclizing of the third ring of atrochrysone carboxylic acid, and the esterase GME11355 might play the role of TE and catalyzes the cyclization reaction of the C ring. The lactamase-like protein GME11357 (or other beta-lactamases in Pestalotiopsis microspora) probably hydrolyzes the thioester bond between the ACP of pks8/GME11356 and the intermediate to release atrochrysone carboxylic acid, which is spontaneously dehydrates to form endocrocin anthrone. Endocrocin anthrone is further converted to emodin via the endocrocin intermediate. Emodin is then oxidized by several enzymes such as the Baeyer-Villiger oxidase GME11358, the oxidoreductase GME11367, the short chain dehydrogenase/reductase GME11373, as well as by other oxidoreductases from the cluster, to modify the A and C rings and open the B ring, and finally yield monodictyphenone. The prenyltransferase GME11375 may catalyze the addition reaction between the C5 side chains and the carbon bone of dibenzodioxocinones. The remaining biochemical reactions to the final product dibenzodioxocinones should be methylation catalyzed by methyltransferase GME11366 and reduction and lactonization reaction catalyzed by a series of oxidordeuctases. This is Cytochrome P450 monooxygenase GME11363 from Pestalotiopsis microspora.